The following is an 890-amino-acid chain: UPF0182 protein Ppro_2689 (890 aa).

7 helical membrane-spanning segments follow: residues 6 to 26 (FILI…LLAF), 50 to 70 (AGSG…NLLL), 102 to 122 (LGIP…AMQW), 157 to 177 (TITA…VLVY), 200 to 220 (LAIL…LDCF), 244 to 264 (TYRI…IGLW), and 266 to 286 (GAWR…VIGI).

Belongs to the UPF0182 family.

It is found in the cell membrane. This is UPF0182 protein Ppro_2689 from Pelobacter propionicus (strain DSM 2379 / NBRC 103807 / OttBd1).